A 123-amino-acid chain; its full sequence is Small ribosomal subunit protein uS12cz/uS12cy (123 aa).

This sequence belongs to the universal ribosomal protein uS12 family. Part of the 30S ribosomal subunit.

It is found in the plastid. Its subcellular location is the chloroplast. Functionally, with S4 and S5 plays an important role in translational accuracy. Located at the interface of the 30S and 50S subunits. The polypeptide is Small ribosomal subunit protein uS12cz/uS12cy (rps12-A) (Coffea arabica (Arabian coffee)).